The chain runs to 334 residues: Protein U17/U16 (334 aa).

Belongs to the herpesviridae US22 family.

Its function is as follows. Isoform 3 can transactivate the human immunodeficiency virus type 1 promoter. This is Protein U17/U16 (U17/U16) from Human herpesvirus 6A (strain Uganda-1102) (HHV-6 variant A).